Consider the following 701-residue polypeptide: Elongation factor G (701 aa).

A tr-type G domain is found at 8–291 (GRYRNIGIVA…AVIDYLPAPT (284 aa)). GTP contacts are provided by residues 17-24 (AHVDAGKT), 89-93 (DTPGH), and 143-146 (NKMD).

Belongs to the TRAFAC class translation factor GTPase superfamily. Classic translation factor GTPase family. EF-G/EF-2 subfamily.

It is found in the cytoplasm. Its function is as follows. Catalyzes the GTP-dependent ribosomal translocation step during translation elongation. During this step, the ribosome changes from the pre-translocational (PRE) to the post-translocational (POST) state as the newly formed A-site-bound peptidyl-tRNA and P-site-bound deacylated tRNA move to the P and E sites, respectively. Catalyzes the coordinated movement of the two tRNA molecules, the mRNA and conformational changes in the ribosome. In Pseudomonas syringae pv. syringae (strain B728a), this protein is Elongation factor G.